Here is a 460-residue protein sequence, read N- to C-terminus: 7-cyano-7-deazaguanine synthase 2 (460 aa).

The active-site For GATase activity is the Cys2. Residues 2–225 enclose the Glutamine amidotransferase type-2 domain; it reads CSVTGVLIIK…PYSIVEVNDN (224 aa). Residue 245 to 255 coordinates ATP; sequence ASGGLDSTVAA. Cys426, Cys434, Cys437, and Cys440 together coordinate Zn(2+).

The protein belongs to the QueC family. Zn(2+) serves as cofactor.

It carries out the reaction 7-carboxy-7-deazaguanine + NH4(+) + ATP = 7-cyano-7-deazaguanine + ADP + phosphate + H2O + H(+). It participates in purine metabolism; 7-cyano-7-deazaguanine biosynthesis. In terms of biological role, catalyzes the ATP-dependent conversion of 7-carboxy-7-deazaguanine (CDG) to 7-cyano-7-deazaguanine (preQ(0)). The polypeptide is 7-cyano-7-deazaguanine synthase 2 (queC2) (Sulfurisphaera tokodaii (strain DSM 16993 / JCM 10545 / NBRC 100140 / 7) (Sulfolobus tokodaii)).